The sequence spans 111 residues: UPF0060 membrane protein Aave_2845 (111 aa).

A run of 4 helical transmembrane segments spans residues 7–27 (FLLY…PWLW), 33–53 (SAWL…LLTL), 63–83 (AAYG…VDGI), and 90–110 (LAGA…PRGA).

This sequence belongs to the UPF0060 family.

The protein localises to the cell inner membrane. This chain is UPF0060 membrane protein Aave_2845, found in Paracidovorax citrulli (strain AAC00-1) (Acidovorax citrulli).